Consider the following 630-residue polypeptide: Chaperone protein HtpG (630 aa).

An a; substrate-binding region spans residues 1-339 (MSHTETHAFQ…SNDLPLNVSR (339 aa)). The segment at 340–556 (EILQSNRVVD…EGDISAHMAR (217 aa)) is b. The tract at residues 557–630 (MMEQMGQAMP…RMNALLSEVI (74 aa)) is c.

It belongs to the heat shock protein 90 family. As to quaternary structure, homodimer.

It is found in the cytoplasm. Molecular chaperone. Has ATPase activity. In Hydrogenovibrio crunogenus (strain DSM 25203 / XCL-2) (Thiomicrospira crunogena), this protein is Chaperone protein HtpG.